The primary structure comprises 236 residues: Leucyl/phenylalanyl-tRNA--protein transferase (236 aa).

The protein belongs to the L/F-transferase family.

The protein localises to the cytoplasm. It carries out the reaction N-terminal L-lysyl-[protein] + L-leucyl-tRNA(Leu) = N-terminal L-leucyl-L-lysyl-[protein] + tRNA(Leu) + H(+). The catalysed reaction is N-terminal L-arginyl-[protein] + L-leucyl-tRNA(Leu) = N-terminal L-leucyl-L-arginyl-[protein] + tRNA(Leu) + H(+). The enzyme catalyses L-phenylalanyl-tRNA(Phe) + an N-terminal L-alpha-aminoacyl-[protein] = an N-terminal L-phenylalanyl-L-alpha-aminoacyl-[protein] + tRNA(Phe). Functionally, functions in the N-end rule pathway of protein degradation where it conjugates Leu, Phe and, less efficiently, Met from aminoacyl-tRNAs to the N-termini of proteins containing an N-terminal arginine or lysine. This Shewanella woodyi (strain ATCC 51908 / MS32) protein is Leucyl/phenylalanyl-tRNA--protein transferase.